Here is a 251-residue protein sequence, read N- to C-terminus: Zinc import ATP-binding protein ZnuC (251 aa).

The region spanning 5–220 (VSLENVSVSF…PEFISMFGPR (216 aa)) is the ABC transporter domain. 37-44 (GPNGAGKS) is an ATP binding site.

It belongs to the ABC transporter superfamily. Zinc importer (TC 3.A.1.15.5) family. The complex is composed of two ATP-binding proteins (ZnuC), two transmembrane proteins (ZnuB) and a solute-binding protein (ZnuA).

The protein resides in the cell inner membrane. It carries out the reaction Zn(2+)(out) + ATP(in) + H2O(in) = Zn(2+)(in) + ADP(in) + phosphate(in) + H(+)(in). In terms of biological role, part of the ABC transporter complex ZnuABC involved in zinc import. Responsible for energy coupling to the transport system. The chain is Zinc import ATP-binding protein ZnuC from Shigella dysenteriae serotype 1 (strain Sd197).